A 168-amino-acid chain; its full sequence is MRVLGIDPGLRNMGWGVIDVSGTRLAHVANGICHSDSGDLAQRLLSLHGQLTDVLARFQPDTAAVEHTFVNKDGVATLKLGQARGIALLVPAQAGLAVGEYAPNAVKKTVVGVGHAAKEQIQHMVRLHLPGVALAGPDAADALAVAICHAHHVQSSGRLEAALARAAR.

Active-site residues include aspartate 7, glutamate 66, and aspartate 138. The Mg(2+) site is built by aspartate 7, glutamate 66, and aspartate 138.

It belongs to the RuvC family. As to quaternary structure, homodimer which binds Holliday junction (HJ) DNA. The HJ becomes 2-fold symmetrical on binding to RuvC with unstacked arms; it has a different conformation from HJ DNA in complex with RuvA. In the full resolvosome a probable DNA-RuvA(4)-RuvB(12)-RuvC(2) complex forms which resolves the HJ. Mg(2+) serves as cofactor.

The protein localises to the cytoplasm. It catalyses the reaction Endonucleolytic cleavage at a junction such as a reciprocal single-stranded crossover between two homologous DNA duplexes (Holliday junction).. The RuvA-RuvB-RuvC complex processes Holliday junction (HJ) DNA during genetic recombination and DNA repair. Endonuclease that resolves HJ intermediates. Cleaves cruciform DNA by making single-stranded nicks across the HJ at symmetrical positions within the homologous arms, yielding a 5'-phosphate and a 3'-hydroxyl group; requires a central core of homology in the junction. The consensus cleavage sequence is 5'-(A/T)TT(C/G)-3'. Cleavage occurs on the 3'-side of the TT dinucleotide at the point of strand exchange. HJ branch migration catalyzed by RuvA-RuvB allows RuvC to scan DNA until it finds its consensus sequence, where it cleaves and resolves the cruciform DNA. The sequence is that of Crossover junction endodeoxyribonuclease RuvC from Cereibacter sphaeroides (strain ATCC 17029 / ATH 2.4.9) (Rhodobacter sphaeroides).